We begin with the raw amino-acid sequence, 155 residues long: Small ribosomal subunit protein uS7c (155 aa).

This sequence belongs to the universal ribosomal protein uS7 family. Part of the 30S ribosomal subunit.

It localises to the plastid. Its subcellular location is the chloroplast. Functionally, one of the primary rRNA binding proteins, it binds directly to 16S rRNA where it nucleates assembly of the head domain of the 30S subunit. The sequence is that of Small ribosomal subunit protein uS7c (rps7) from Saruma henryi (Upright wild ginger).